The chain runs to 262 residues: Acyl-[acyl-carrier-protein]--UDP-N-acetylglucosamine O-acyltransferase (262 aa).

The protein belongs to the transferase hexapeptide repeat family. LpxA subfamily. In terms of assembly, homotrimer.

The protein localises to the cytoplasm. It carries out the reaction a (3R)-hydroxyacyl-[ACP] + UDP-N-acetyl-alpha-D-glucosamine = a UDP-3-O-[(3R)-3-hydroxyacyl]-N-acetyl-alpha-D-glucosamine + holo-[ACP]. The protein operates within glycolipid biosynthesis; lipid IV(A) biosynthesis; lipid IV(A) from (3R)-3-hydroxytetradecanoyl-[acyl-carrier-protein] and UDP-N-acetyl-alpha-D-glucosamine: step 1/6. In terms of biological role, involved in the biosynthesis of lipid A, a phosphorylated glycolipid that anchors the lipopolysaccharide to the outer membrane of the cell. The sequence is that of Acyl-[acyl-carrier-protein]--UDP-N-acetylglucosamine O-acyltransferase from Blochmanniella floridana.